The sequence spans 159 residues: Large ribosomal subunit protein uL22 (159 aa).

Belongs to the universal ribosomal protein uL22 family. In terms of assembly, part of the 50S ribosomal subunit.

Its function is as follows. This protein binds specifically to 23S rRNA. It makes multiple contacts with different domains of the 23S rRNA in the assembled 50S subunit and ribosome. The globular domain of the protein is located near the polypeptide exit tunnel on the outside of the subunit, while an extended beta-hairpin is found that lines the wall of the exit tunnel in the center of the 70S ribosome. The chain is Large ribosomal subunit protein uL22 from Methanopyrus kandleri (strain AV19 / DSM 6324 / JCM 9639 / NBRC 100938).